We begin with the raw amino-acid sequence, 365 residues long: Growth-regulating factor 7 (365 aa).

The QLQ domain maps to 59-94 (PFTNAQLKELERQAMIYKYMIASIPVPFDLLVSSPS). Residues 107–151 (DLEPGRCRRTDGKKWRCAKEVVSNHKYCEKHLHRGRPRSRKHVEP) form the WRC domain. Short sequence motifs (bipartite nuclear localization signal) lie at residues 112 to 122 (RCRRTDGKKWR) and 140 to 147 (RGRPRSRK). Residues 137–147 (HLHRGRPRSRK) show a composition bias toward basic residues. Disordered regions lie at residues 137 to 187 (HLHR…TLEP) and 332 to 365 (IESYSLMETPTPSSSPSRVMKKMTSSVSDESSQV). The segment covering 337 to 365 (LMETPTPSSSPSRVMKKMTSSVSDESSQV) has biased composition (polar residues).

The protein belongs to the GRF family.

The protein localises to the nucleus. Functionally, transcription activator that plays a role in the regulation of cell expansion in leaf and cotyledons tissues. Component of a network formed by miR396, the GRFs and their interacting factors (GIFs) acting in the regulation of meristem function, at least partially through the control of cell proliferation. In Arabidopsis thaliana (Mouse-ear cress), this protein is Growth-regulating factor 7 (GRF7).